The chain runs to 139 residues: MPFIESMAPLSRAITRGISQFSCYSNTLVLRSSRNSSSSLVKRSYVSSRVSPKKPQHNSDATSSAQKVANKTHTSSVLPGTILKGLCIKAGGVDPVAREDHEYPEWLWSLLDEPAPNSKTARSHARKSAIRAANFLTKK.

Residues 1 to 50 (MPFIESMAPLSRAITRGISQFSCYSNTLVLRSSRNSSSSLVKRSYVSSRV) constitute a mitochondrion transit peptide. Over residues 35–50 (NSSSSLVKRSYVSSRV) the composition is skewed to low complexity. Residues 35–74 (NSSSSLVKRSYVSSRVSPKKPQHNSDATSSAQKVANKTHT) form a disordered region. Positions 58–74 (NSDATSSAQKVANKTHT) are enriched in polar residues.

Belongs to the mitochondrion-specific ribosomal protein mL54 family. In terms of assembly, component of the mitochondrial large ribosomal subunit (mt-LSU). Mature yeast 74S mitochondrial ribosomes consist of a small (37S) and a large (54S) subunit. The 37S small subunit contains a 15S ribosomal RNA (15S mt-rRNA) and at least 32 different proteins. The 54S large subunit contains a 21S rRNA (21S mt-rRNA) and at least 45 different proteins.

Its subcellular location is the mitochondrion. In terms of biological role, component of the mitochondrial ribosome (mitoribosome), a dedicated translation machinery responsible for the synthesis of mitochondrial genome-encoded proteins, including at least some of the essential transmembrane subunits of the mitochondrial respiratory chain. The mitoribosomes are attached to the mitochondrial inner membrane and translation products are cotranslationally integrated into the membrane. mL54 may have a meiosis-specific role as it accumulates during the middle stage of sporulation. This chain is Large ribosomal subunit protein mL54 (mrpl37), found in Schizosaccharomyces pombe (strain 972 / ATCC 24843) (Fission yeast).